Reading from the N-terminus, the 519-residue chain is Protein nucleotidyltransferase YdiU (519 aa).

ATP contacts are provided by glycine 100, glycine 102, arginine 103, lysine 123, aspartate 135, glycine 136, arginine 193, and arginine 200. The Proton acceptor role is filled by aspartate 270. 2 residues coordinate Mg(2+): asparagine 271 and aspartate 280. Aspartate 280 lines the ATP pocket.

Belongs to the SELO family. Mg(2+) is required as a cofactor. Requires Mn(2+) as cofactor.

The catalysed reaction is L-seryl-[protein] + ATP = 3-O-(5'-adenylyl)-L-seryl-[protein] + diphosphate. It catalyses the reaction L-threonyl-[protein] + ATP = 3-O-(5'-adenylyl)-L-threonyl-[protein] + diphosphate. It carries out the reaction L-tyrosyl-[protein] + ATP = O-(5'-adenylyl)-L-tyrosyl-[protein] + diphosphate. The enzyme catalyses L-histidyl-[protein] + UTP = N(tele)-(5'-uridylyl)-L-histidyl-[protein] + diphosphate. The catalysed reaction is L-seryl-[protein] + UTP = O-(5'-uridylyl)-L-seryl-[protein] + diphosphate. It catalyses the reaction L-tyrosyl-[protein] + UTP = O-(5'-uridylyl)-L-tyrosyl-[protein] + diphosphate. Its function is as follows. Nucleotidyltransferase involved in the post-translational modification of proteins. It can catalyze the addition of adenosine monophosphate (AMP) or uridine monophosphate (UMP) to a protein, resulting in modifications known as AMPylation and UMPylation. In Xylella fastidiosa (strain Temecula1 / ATCC 700964), this protein is Protein nucleotidyltransferase YdiU.